A 369-amino-acid polypeptide reads, in one-letter code: WAT1-related protein At3g53210 (369 aa).

10 consecutive transmembrane segments (helical) span residues 12 to 31, 39 to 59, 72 to 92, 103 to 123, 133 to 153, 182 to 202, 214 to 234, 252 to 272, 278 to 298, and 303 to 323; these read IAMVVFQTGYAGNHVIMRYA, LVFPLYRTIVAFSVLAPSAYF, FLIQFFLLGLVGITLNQGFYI, ASATENVVPAVSFLMAALLGI, GIAKVVGTIVSVAGSLVITLY, WTLGCLCLMGHCLCWSSWIVL, FSFVSYSCFFAVIQFFGISAY, ALLYTGLVGSAMVFAIQIYVV, LFVSAYLPLQTLIAAVLATLA, and FYLGGLIGAILIMSGLYLVVM. EamA domains lie at 24–150 and 194–323; these read NHVI…SLVI and LCWS…LVVM. A disordered region spans residues 348-369; it reads GDEEDYHNNKPRSPISQPLISS.

The protein belongs to the drug/metabolite transporter (DMT) superfamily. Plant drug/metabolite exporter (P-DME) (TC 2.A.7.4) family.

The protein resides in the membrane. This chain is WAT1-related protein At3g53210, found in Arabidopsis thaliana (Mouse-ear cress).